Reading from the N-terminus, the 318-residue chain is Malate dehydrogenase (318 aa).

NAD(+)-binding positions include 10–15 (GGGQIG) and Asp-34. Substrate-binding residues include Arg-83 and Arg-89. Residues Asn-96 and 119-121 (ISN) each bind NAD(+). Residues Asn-121 and Arg-152 each contribute to the substrate site. Catalysis depends on His-176, which acts as the Proton acceptor.

It belongs to the LDH/MDH superfamily. MDH type 3 family.

It catalyses the reaction (S)-malate + NAD(+) = oxaloacetate + NADH + H(+). In terms of biological role, catalyzes the reversible oxidation of malate to oxaloacetate. The polypeptide is Malate dehydrogenase (Geotalea daltonii (strain DSM 22248 / JCM 15807 / FRC-32) (Geobacter daltonii)).